The sequence spans 306 residues: Ribosomal protein L11 methyltransferase (306 aa).

Residues Thr-139, Gly-173, Asp-195, and Asn-242 each contribute to the S-adenosyl-L-methionine site.

The protein belongs to the methyltransferase superfamily. PrmA family.

It localises to the cytoplasm. It carries out the reaction L-lysyl-[protein] + 3 S-adenosyl-L-methionine = N(6),N(6),N(6)-trimethyl-L-lysyl-[protein] + 3 S-adenosyl-L-homocysteine + 3 H(+). Its function is as follows. Methylates ribosomal protein L11. In Trichormus variabilis (strain ATCC 29413 / PCC 7937) (Anabaena variabilis), this protein is Ribosomal protein L11 methyltransferase.